The sequence spans 494 residues: Glycosyl hydrolase family 109 protein (494 aa).

Disordered stretches follow at residues 1-35 and 59-86; these read MNDAAPQNPGQDEAKGTGEKDNGGSMSPRSALRTT and EAAQTAVPAAESDESAAPKRQGRTMAGV. Residues 1 to 55 constitute a signal peptide (tat-type signal); that stretch reads MNDAAPQNPGQDEAKGTGEKDNGGSMSPRSALRTTAGVAGAGLGLSALGTGTASA. Positions 12–22 are enriched in basic and acidic residues; the sequence is DEAKGTGEKDN. NAD(+) is bound by residues 103–104, D125, 174–177, 194–195, and N223; these read NR, WDFH, and EC. Substrate is bound by residues Y252, R271, 283-286, and Y365; that span reads YPNH. Y283 is a binding site for NAD(+). Residues 463-494 form a disordered region; sequence KANGKPQQIPDFTRGEWKKSRPGTDSEKPSEP. The span at 475–494 shows a compositional bias: basic and acidic residues; sequence TRGEWKKSRPGTDSEKPSEP.

This sequence belongs to the Gfo/Idh/MocA family. Glycosyl hydrolase 109 subfamily. NAD(+) is required as a cofactor. In terms of processing, predicted to be exported by the Tat system. The position of the signal peptide cleavage has not been experimentally proven.

Glycosidase. This Streptomyces niveus (Streptomyces spheroides) protein is Glycosyl hydrolase family 109 protein.